Consider the following 180-residue polypeptide: Regulator of G-protein signaling 8 (180 aa).

Ser26 is subject to Phosphoserine. The region spanning 56–171 (SFDVLLSHKY…FLRSKMYLDL (116 aa)) is the RGS domain.

Interacts with GNAO1 and GNAI3. Expressed at high levels in brain. Very little expression detected in other tissues. Detected in Purkinje cells in the cerebellum.

It is found in the cell membrane. Its subcellular location is the membrane. It localises to the perikaryon. The protein resides in the cell projection. The protein localises to the dendrite. It is found in the nucleus. Functionally, regulates G protein-coupled receptor signaling cascades, including signaling via muscarinic acetylcholine receptor CHRM2 and dopamine receptor DRD2. Inhibits signal transduction by increasing the GTPase activity of G protein alpha subunits, thereby driving them into their inactive GDP-bound form. Modulates the activity of potassium channels that are activated in response to DRD2 and CHRM2 signaling. The polypeptide is Regulator of G-protein signaling 8 (Rgs8) (Rattus norvegicus (Rat)).